The chain runs to 346 residues: Ribosomal RNA small subunit methyltransferase H (346 aa).

S-adenosyl-L-methionine-binding positions include 46–48 (GGY), aspartate 63, phenylalanine 90, aspartate 113, and glutamine 120. The disordered stretch occupies residues 270-346 (GGSAGSRHMP…LPETNELARS (77 aa)).

It belongs to the methyltransferase superfamily. RsmH family.

The protein localises to the cytoplasm. The enzyme catalyses cytidine(1402) in 16S rRNA + S-adenosyl-L-methionine = N(4)-methylcytidine(1402) in 16S rRNA + S-adenosyl-L-homocysteine + H(+). Functionally, specifically methylates the N4 position of cytidine in position 1402 (C1402) of 16S rRNA. This is Ribosomal RNA small subunit methyltransferase H from Brucella suis (strain ATCC 23445 / NCTC 10510).